We begin with the raw amino-acid sequence, 165 residues long: Destrin (165 aa).

At A2 the chain carries N-acetylalanine. Residue S3 is modified to Phosphoserine. The ADF-H domain occupies 4–153 (GVQVADEVCR…NRACIAEKLG (150 aa)). K19 is modified (N6-acetyllysine). A Nuclear localization signal motif is present at residues 30–34 (KKRKK).

This sequence belongs to the actin-binding proteins ADF family. Post-translationally, ISGylated.

Actin-depolymerizing protein. Severs actin filaments (F-actin) and binds to actin monomers (G-actin). Acts in a pH-independent manner. This is Destrin (DSTN) from Bos taurus (Bovine).